The following is a 118-amino-acid chain: MARIAGINIPDHKHTVIALTSIYGIGKTRSQHICAATGIAEHVKISELSEEQIDTLREAVTKFVVEGDLRREVTLSIKRLMDLGTYRGLRHRRGLPVRGQRTKTNARTRKGPRKPIKK.

The segment at H91 to K118 is disordered.

This sequence belongs to the universal ribosomal protein uS13 family. As to quaternary structure, part of the 30S ribosomal subunit. Forms a loose heterodimer with protein S19. Forms two bridges to the 50S subunit in the 70S ribosome.

Its function is as follows. Located at the top of the head of the 30S subunit, it contacts several helices of the 16S rRNA. In the 70S ribosome it contacts the 23S rRNA (bridge B1a) and protein L5 of the 50S subunit (bridge B1b), connecting the 2 subunits; these bridges are implicated in subunit movement. Contacts the tRNAs in the A and P-sites. In Sodalis glossinidius (strain morsitans), this protein is Small ribosomal subunit protein uS13.